Reading from the N-terminus, the 281-residue chain is Large ribosomal subunit protein uL2 (281 aa).

The disordered stretch occupies residues 220 to 281 (VRGSVMNPND…RRRDGKALSK (62 aa)). Over residues 258–271 (KTRKKNKQSNKMIM) the composition is skewed to basic residues. Positions 272 to 281 (RRRDGKALSK) are enriched in basic and acidic residues.

Belongs to the universal ribosomal protein uL2 family. Part of the 50S ribosomal subunit. Forms a bridge to the 30S subunit in the 70S ribosome.

Functionally, one of the primary rRNA binding proteins. Required for association of the 30S and 50S subunits to form the 70S ribosome, for tRNA binding and peptide bond formation. It has been suggested to have peptidyltransferase activity; this is somewhat controversial. Makes several contacts with the 16S rRNA in the 70S ribosome. This Lachnoclostridium phytofermentans (strain ATCC 700394 / DSM 18823 / ISDg) (Clostridium phytofermentans) protein is Large ribosomal subunit protein uL2.